A 718-amino-acid polypeptide reads, in one-letter code: Polyribonucleotide nucleotidyltransferase (718 aa).

The Mg(2+) site is built by Asp-487 and Asp-493. The 60-residue stretch at 554 to 613 folds into the KH domain; the sequence is PRIETFKIPTDKIREVIGTGGKVIREIVEKTGAKVNIEDDGTVKVASSDGESIKAAIKWI. The S1 motif domain occupies 623 to 691; it reads GEIYEGTVVK…DRGKTRLSMR (69 aa). The tract at residues 694–718 is disordered; that stretch reads DQETGEDLEAKQKAEGEAPAQATGE.

The protein belongs to the polyribonucleotide nucleotidyltransferase family. Requires Mg(2+) as cofactor.

The protein resides in the cytoplasm. It carries out the reaction RNA(n+1) + phosphate = RNA(n) + a ribonucleoside 5'-diphosphate. Functionally, involved in mRNA degradation. Catalyzes the phosphorolysis of single-stranded polyribonucleotides processively in the 3'- to 5'-direction. This chain is Polyribonucleotide nucleotidyltransferase, found in Rhodopseudomonas palustris (strain HaA2).